The primary structure comprises 394 residues: uncharacterized protein (394 aa).

Asn-3, Asn-14, Asn-20, and Asn-25 each carry an N-linked (GlcNAc...) asparagine glycan. 6 consecutive transmembrane segments (helical) span residues 64-84, 101-121, 133-153, 180-200, 228-248, and 256-276; these read AVGIVTACFCFFLIPLLLVNI, FIWITLLILALAVGGFAYIDV, IFSFTFQTALPISIAIIWHVI, IFVVEYYAPIVFYVFNLMGFF, VLLAIAWVFACAMFIVYSFVY, and WVGMVIMMISILPRIVYQFLE. Residues Asn-283 and Asn-286 are each glycosylated (N-linked (GlcNAc...) asparagine). A helical transmembrane segment spans residues 291–311; that stretch reads AGLVFGLGFCPPLILAYTVCI. Asn-344 carries N-linked (GlcNAc...) asparagine glycosylation.

The protein localises to the membrane. This is an uncharacterized protein from Schizosaccharomyces pombe (strain 972 / ATCC 24843) (Fission yeast).